Consider the following 468-residue polypeptide: Glutamate--tRNA ligase (468 aa).

The 'HIGH' region motif lies at 10–20 (PSPTGDLHIGG). Residues Cys99, Cys101, Cys126, and Asp128 each contribute to the Zn(2+) site. Residues 236 to 240 (RLSKR) carry the 'KMSKS' region motif. Residue Lys239 participates in ATP binding.

It belongs to the class-I aminoacyl-tRNA synthetase family. Glutamate--tRNA ligase type 1 subfamily. In terms of assembly, monomer. Zn(2+) serves as cofactor.

It localises to the cytoplasm. It carries out the reaction tRNA(Glu) + L-glutamate + ATP = L-glutamyl-tRNA(Glu) + AMP + diphosphate. Functionally, catalyzes the attachment of glutamate to tRNA(Glu) in a two-step reaction: glutamate is first activated by ATP to form Glu-AMP and then transferred to the acceptor end of tRNA(Glu). The sequence is that of Glutamate--tRNA ligase from Syntrophobacter fumaroxidans (strain DSM 10017 / MPOB).